Reading from the N-terminus, the 969-residue chain is Poly(ADP-ribose) glycohydrolase (969 aa).

Disordered stretches follow at residues 1–149, 161–341, and 368–400; these read MSAG…QQQT, HAEQ…CQAR, and NNAG…GKRD. An A-domain region spans residues 1–449; that stretch reads MSAGPGWEPC…LPPEKKWLGT (449 aa). Residues 10–16 carry the Nuclear localization signal motif; the sequence is CTKRPRW. Polar residues predominate over residues 69–84; sequence NATSFVFKQKTITTWM. Residues 77-84 carry the PIP-box (PCNA interacting peptide) motif; the sequence is QKTITTWM. The segment covering 87 to 100 has biased composition (basic and acidic residues); the sequence is KGPKTAESESKENN. A compositionally biased stretch (polar residues) spans 101 to 113; sequence NTRIDSMMSSVQK. Positions 116 to 125 are enriched in basic and acidic residues; that stretch reads FYPHKVEKLE. Composition is skewed to polar residues over residues 128–149 and 179–189; these read PQLN…QQQT and QLSNANIGQSP. S135 carries the phosphoserine modification. Residue T137 is modified to Phosphothreonine. Positions 190-205 are enriched in basic and acidic residues; the sequence is HTDDHSDTDHEEDRDN. Phosphoserine is present on S195. Position 197 is a phosphothreonine (T197). A compositionally biased stretch (polar residues) spans 226 to 237; it reads ARSNCKCSGSRQ. Phosphoserine is present on residues S256, S259, S281, S286, S293, S297, and S311. Over residues 275–284 the composition is skewed to polar residues; sequence KLTGQESSLG. Residues 311-325 are compositionally biased toward acidic residues; the sequence is SEADEETSPVFDEQD. Composition is skewed to polar residues over residues 329–339 and 369–387; these read SQTANKLSSCQ and NAGT…SSLN. K334 carries the post-translational modification N6-acetyllysine. A catalytic region spans residues 603–788; sequence QPIPLLKQKM…TEQYSEYTGY (186 aa). 719–720 serves as a coordination point for substrate; sequence IE. The active site involves D730. N733 and Q747 together coordinate substrate. Catalysis depends on residues E748 and E749. Substrate contacts are provided by residues Y788 and 862 to 867; that span reads NWGCGA.

The protein belongs to the poly(ADP-ribose) glycohydrolase family. Interacts with PCNA. Interacts with NUDT5.

It is found in the nucleus. It carries out the reaction [(1''-&gt;2')-ADP-alpha-D-ribose](n) + H2O = [(1''-&gt;2')-ADP-alpha-D-ribose](n-1) + ADP-D-ribose. In terms of biological role, poly(ADP-ribose) glycohydrolase that degrades poly(ADP-ribose) by hydrolyzing the ribose-ribose bonds present in poly(ADP-ribose). PARG acts both as an endo- and exoglycosidase, releasing poly(ADP-ribose) of different length as well as ADP-ribose monomers. It is however unable to cleave the ester bond between the terminal ADP-ribose and ADP-ribosylated residues, leaving proteins that are mono-ADP-ribosylated. Poly(ADP-ribose) is synthesized after DNA damage is only present transiently and is rapidly degraded by PARG. Required to prevent detrimental accumulation of poly(ADP-ribose) upon prolonged replicative stress, while it is not required for recovery from transient replicative stress. Responsible for the prevalence of mono-ADP-ribosylated proteins in cells, thanks to its ability to degrade poly(ADP-ribose) without cleaving the terminal protein-ribose bond. Required for retinoid acid-dependent gene transactivation, probably by removing poly(ADP-ribose) from histone demethylase KDM4D, allowing chromatin derepression at RAR-dependent gene promoters. Involved in the synthesis of ATP in the nucleus, together with PARP1, NMNAT1 and NUDT5. Nuclear ATP generation is required for extensive chromatin remodeling events that are energy-consuming. In Mus musculus (Mouse), this protein is Poly(ADP-ribose) glycohydrolase.